The following is a 266-amino-acid chain: MRIDVVSIFPEYLAPLELSLIGKARQDGLLELNVHDLRTFTTDKHRTVDDTPYGGGAGMVMKPEPWAQALESVAAARENSKPVLIVPSPAGEKFNQALAYELAEEEQLVFACGRYEGIDERVIDWAQDHFRVRPVSLGDYVLNGGEVAVLAMVEAIGRLLPGVVGNPESLVEESHSDGLLEYPVYTKPSAWRDHDVPPILLSGNHGKIAQWRRHEQFRRTAERRPDLMEGLDAGVLSRADRQALADLGYDVVDGRLRAKPGGDTEN.

S-adenosyl-L-methionine-binding positions include Gly113 and 137 to 142 (LGDYVL).

Belongs to the RNA methyltransferase TrmD family. Homodimer.

The protein resides in the cytoplasm. It catalyses the reaction guanosine(37) in tRNA + S-adenosyl-L-methionine = N(1)-methylguanosine(37) in tRNA + S-adenosyl-L-homocysteine + H(+). Its function is as follows. Specifically methylates guanosine-37 in various tRNAs. The sequence is that of tRNA (guanine-N(1)-)-methyltransferase from Paenarthrobacter aurescens (strain TC1).